Here is a 305-residue protein sequence, read N- to C-terminus: Epoxyqueuosine reductase (305 aa).

Residue Asp128 is the Proton donor of the active site. The 4Fe-4S ferredoxin-type domain maps to 170 to 202; that stretch reads LSLTSDTPHAKYCGTCRKCLDICPTKAIVHPFV. The [4Fe-4S] cluster site is built by Cys182, Cys185, Cys188, Cys192, Cys208, Cys236, Cys239, and Cys243.

The protein belongs to the QueG family. In terms of assembly, monomer. The cofactor is cob(II)alamin. [4Fe-4S] cluster serves as cofactor.

It localises to the cytoplasm. The catalysed reaction is epoxyqueuosine(34) in tRNA + AH2 = queuosine(34) in tRNA + A + H2O. The protein operates within tRNA modification; tRNA-queuosine biosynthesis. Catalyzes the conversion of epoxyqueuosine (oQ) to queuosine (Q), which is a hypermodified base found in the wobble positions of tRNA(Asp), tRNA(Asn), tRNA(His) and tRNA(Tyr). This chain is Epoxyqueuosine reductase, found in Atelocyanobacterium thalassa (isolate ALOHA).